A 212-amino-acid polypeptide reads, in one-letter code: Pyridoxine/pyridoxamine 5'-phosphate oxidase (212 aa).

Substrate contacts are provided by residues 8 to 11 (RREY) and Lys66. Residues 61 to 66 (RIVLLK), 76 to 77 (FT), Arg82, Lys83, and Gln105 contribute to the FMN site. Tyr123, Arg127, and Ser131 together coordinate substrate. FMN is bound by residues 140-141 (QS) and Trp185. 191-193 (RLH) contacts substrate. An FMN-binding site is contributed by Arg195.

This sequence belongs to the pyridoxamine 5'-phosphate oxidase family. In terms of assembly, homodimer. Requires FMN as cofactor.

It catalyses the reaction pyridoxamine 5'-phosphate + O2 + H2O = pyridoxal 5'-phosphate + H2O2 + NH4(+). It carries out the reaction pyridoxine 5'-phosphate + O2 = pyridoxal 5'-phosphate + H2O2. It participates in cofactor metabolism; pyridoxal 5'-phosphate salvage; pyridoxal 5'-phosphate from pyridoxamine 5'-phosphate: step 1/1. Its pathway is cofactor metabolism; pyridoxal 5'-phosphate salvage; pyridoxal 5'-phosphate from pyridoxine 5'-phosphate: step 1/1. Catalyzes the oxidation of either pyridoxine 5'-phosphate (PNP) or pyridoxamine 5'-phosphate (PMP) into pyridoxal 5'-phosphate (PLP). This is Pyridoxine/pyridoxamine 5'-phosphate oxidase from Shewanella oneidensis (strain ATCC 700550 / JCM 31522 / CIP 106686 / LMG 19005 / NCIMB 14063 / MR-1).